A 344-amino-acid polypeptide reads, in one-letter code: 1-acyl-sn-glycerol-3-phosphate acyltransferase BAT2, chloroplastic (344 aa).

A chloroplast-targeting transit peptide spans 1 to 49 (MDVASAPGVSSHPPYYSKPICSSQSSLIRIPINKGCCFARSSNLITSLH). The chain crosses the membrane as a helical span at residues 113–133 (GICFCLVAGVSAIVLIVLMIT). An HXXXXD motif motif is present at residues 188–193 (HQSFLD). A helical transmembrane segment spans residues 210–230 (TGIFVIPVIGWAMSMMGVVPL).

The protein belongs to the 1-acyl-sn-glycerol-3-phosphate acyltransferase family. As to expression, widely expressed.

The protein localises to the plastid. It localises to the chloroplast membrane. The catalysed reaction is a fatty acyl-[ACP] + a 1-acyl-sn-glycero-3-phosphate = a 1,2-diacyl-sn-glycero-3-phosphate + holo-[ACP]. It carries out the reaction a 1-acyl-sn-glycero-3-phosphate + an acyl-CoA = a 1,2-diacyl-sn-glycero-3-phosphate + CoA. Its pathway is phospholipid metabolism; CDP-diacylglycerol biosynthesis; CDP-diacylglycerol from sn-glycerol 3-phosphate: step 2/3. Functionally, plastidial enzyme of the prokaryotic glycerol-3-phosphate pathway that converts lysophosphatidic acid (LPA) into phosphatidic acid by incorporating an acyl moiety at position sn-2. Utilizes palmitoyl-ACP (16:0-ACP) to produce phosphatidic acid containing a saturated group at position sn-2, which is characteristic of lipids synthesized by the prokaryotic pathway. In vitro, can use 16:0-CoA as acyl donor. This Brassica napus (Rape) protein is 1-acyl-sn-glycerol-3-phosphate acyltransferase BAT2, chloroplastic.